The primary structure comprises 185 residues: Dual-action ribosomal maturation protein DarP (185 aa).

The disordered stretch occupies residues 1-22; the sequence is MWKNGAMRGCNKETGEFLGPSR.

Belongs to the DarP family.

Its subcellular location is the cytoplasm. Member of a network of 50S ribosomal subunit biogenesis factors which assembles along the 30S-50S interface, preventing incorrect 23S rRNA structures from forming. Promotes peptidyl transferase center (PTC) maturation. This chain is Dual-action ribosomal maturation protein DarP, found in Xylella fastidiosa (strain 9a5c).